Reading from the N-terminus, the 243-residue chain is UMP-CMP kinase 2 (243 aa).

Position 69–74 (69–74 (GSGKGT)) interacts with ATP. The tract at residues 89–118 (SAGDLLRSEISTGREKGELILNIIKEGKIV) is NMP. A ribonucleoside 5'-phosphate is bound by residues R95, 116–118 (KIV), and 143–146 (GFPR). N150 provides a ligand contact to CMP. The interval 181-189 (GRNQGRVDD) is LID. Residue R182 coordinates ATP. A ribonucleoside 5'-phosphate contacts are provided by R186 and R197.

It belongs to the adenylate kinase family. UMP-CMP kinase subfamily. Monomer. Requires Mg(2+) as cofactor.

It localises to the cytoplasm. The protein resides in the nucleus. The catalysed reaction is UMP + ATP = UDP + ADP. It carries out the reaction CMP + ATP = CDP + ADP. It catalyses the reaction dCMP + ATP = dCDP + ADP. In terms of biological role, catalyzes the phosphorylation of pyrimidine nucleoside monophosphates at the expense of ATP. Plays an important role in de novo pyrimidine nucleotide biosynthesis. Has preference for UMP and CMP as phosphate acceptors. This is UMP-CMP kinase 2 from Oryza sativa subsp. japonica (Rice).